The following is a 492-amino-acid chain: Aspartyl/glutamyl-tRNA(Asn/Gln) amidotransferase subunit B (492 aa).

The protein belongs to the GatB/GatE family. GatB subfamily. As to quaternary structure, heterotrimer of A, B and C subunits.

The enzyme catalyses L-glutamyl-tRNA(Gln) + L-glutamine + ATP + H2O = L-glutaminyl-tRNA(Gln) + L-glutamate + ADP + phosphate + H(+). The catalysed reaction is L-aspartyl-tRNA(Asn) + L-glutamine + ATP + H2O = L-asparaginyl-tRNA(Asn) + L-glutamate + ADP + phosphate + 2 H(+). Functionally, allows the formation of correctly charged Asn-tRNA(Asn) or Gln-tRNA(Gln) through the transamidation of misacylated Asp-tRNA(Asn) or Glu-tRNA(Gln) in organisms which lack either or both of asparaginyl-tRNA or glutaminyl-tRNA synthetases. The reaction takes place in the presence of glutamine and ATP through an activated phospho-Asp-tRNA(Asn) or phospho-Glu-tRNA(Gln). In Prochlorococcus marinus (strain SARG / CCMP1375 / SS120), this protein is Aspartyl/glutamyl-tRNA(Asn/Gln) amidotransferase subunit B.